Here is a 366-residue protein sequence, read N- to C-terminus: tRNA-specific 2-thiouridylase MnmA (366 aa).

ATP contacts are provided by residues 6–13 (AMSGGVDS) and Leu32. Residue Cys101 is the Nucleophile of the active site. Cys101 and Cys197 are oxidised to a cystine. Gly125 is an ATP binding site. An interaction with tRNA region spans residues 147–149 (KDQ). The Cysteine persulfide intermediate role is filled by Cys197.

Belongs to the MnmA/TRMU family.

The protein localises to the cytoplasm. It catalyses the reaction S-sulfanyl-L-cysteinyl-[protein] + uridine(34) in tRNA + AH2 + ATP = 2-thiouridine(34) in tRNA + L-cysteinyl-[protein] + A + AMP + diphosphate + H(+). Catalyzes the 2-thiolation of uridine at the wobble position (U34) of tRNA, leading to the formation of s(2)U34. The protein is tRNA-specific 2-thiouridylase MnmA of Cutibacterium acnes (strain DSM 16379 / KPA171202) (Propionibacterium acnes).